The chain runs to 482 residues: Glutamate--tRNA ligase 2 (482 aa).

The short motif at 16 to 26 (PSPTGYLHLGN) is the 'HIGH' region element. Zn(2+)-binding residues include Cys-113, Cys-115, Cys-140, and His-142. Residues 257-261 (PLSKR) carry the 'KMSKS' region motif. Residue Lys-260 coordinates ATP.

It belongs to the class-I aminoacyl-tRNA synthetase family. Glutamate--tRNA ligase type 1 subfamily. As to quaternary structure, monomer. Zn(2+) serves as cofactor.

The protein resides in the cytoplasm. It carries out the reaction tRNA(Glu) + L-glutamate + ATP = L-glutamyl-tRNA(Glu) + AMP + diphosphate. Its function is as follows. Catalyzes the attachment of glutamate to tRNA(Glu) in a two-step reaction: glutamate is first activated by ATP to form Glu-AMP and then transferred to the acceptor end of tRNA(Glu). This Acidithiobacillus ferrooxidans (strain ATCC 53993 / BNL-5-31) (Leptospirillum ferrooxidans (ATCC 53993)) protein is Glutamate--tRNA ligase 2.